The following is a 113-amino-acid chain: TYRO protein tyrosine kinase-binding protein (113 aa).

Residues 1–21 (MGGLEPCSRLLLLPLLLAVSG) form the signal peptide. The Extracellular portion of the chain corresponds to 22 to 40 (LRPVQAQAQSDCSCSTVSP). Residues 41-61 (GVLAGIVMGDLVLTVLIALAV) form a helical membrane-spanning segment. Asp50 is a Ca(2+) binding site. Topologically, residues 62 to 113 (YFLGRLVPRGRGAAEAATRKQRITETESPYQELQGQRSDVYSDLNTQRPYYK) are cytoplasmic. The disordered stretch occupies residues 75 to 113 (AEAATRKQRITETESPYQELQGQRSDVYSDLNTQRPYYK). Residues 80–108 (RKQRITETESPYQELQGQRSDVYSDLNTQ) enclose the ITAM domain. The segment covering 87–113 (TESPYQELQGQRSDVYSDLNTQRPYYK) has biased composition (polar residues). Residues Tyr91 and Tyr102 each carry the phosphotyrosine modification.

The protein belongs to the TYROBP family. In terms of assembly, homodimer; disulfide-linked. Homotrimer; disulfide-linked. Homotetramer; disulfide-linked. Homotrimers and homotetramers form when low levels of partner receptors are available and are competitive with assembly with interacting receptors. They may represent alternative oligomerization states or may be intermediates in the receptor assembly process. Binding of a metal cation aids in homooligomerization through coordination of the metal ion by the subunits of the oligomer. Interacts with TREM1. Interacts with TREM2. Interacts with SIRPB1. Interacts with CLECSF5. Interacts with SIGLEC14. Interacts with CD300LB and CD300E. Interacts with CD300C2. Interacts (via ITAM domain) with SYK (via SH2 domains); activates SYK mediating neutrophil and macrophage integrin-mediated activation. Interacts with KLRC2, KIR2DS3 and KIR2DS5. Interacts with CD300H. Interacts with KIR2DS1. Interacts with KLRD1. Interacts with SIGLEC1. Post-translationally, following ligand binding by associated receptors, tyrosine phosphorylated in the ITAM domain which leads to activation of additional tyrosine kinases and subsequent cell activation. Expressed at low levels in the early development of the hematopoietic system and in the promonocytic stage and at high levels in mature monocytes. Expressed in hematological cells and tissues such as peripheral blood leukocytes and spleen. Also found in bone marrow, lymph nodes, placenta, lung and liver. Expressed at lower levels in different parts of the brain especially in the basal ganglia and corpus callosum.

It is found in the cell membrane. Adapter protein which non-covalently associates with activating receptors found on the surface of a variety of immune cells to mediate signaling and cell activation following ligand binding by the receptors. TYROBP is tyrosine-phosphorylated in the ITAM domain following ligand binding by the associated receptors which leads to activation of additional tyrosine kinases and subsequent cell activation. Also has an inhibitory role in some cells. Non-covalently associates with activating receptors of the CD300 family to mediate cell activation. Also mediates cell activation through association with activating receptors of the CD200R family. Required for neutrophil activation mediated by integrin. Required for the activation of myeloid cells mediated by the CLEC5A/MDL1 receptor. Associates with natural killer (NK) cell receptors such as KIR2DS2 and the KLRD1/KLRC2 heterodimer to mediate NK cell activation. Also enhances trafficking and cell surface expression of NK cell receptors KIR2DS1, KIR2DS2 and KIR2DS4 and ensures their stability at the cell surface. Associates with SIRPB1 to mediate activation of myeloid cells such as monocytes and dendritic cells. Associates with TREM1 to mediate activation of neutrophils and monocytes. Associates with TREM2 on monocyte-derived dendritic cells to mediate up-regulation of chemokine receptor CCR7 and dendritic cell maturation and survival. Association with TREM2 mediates cytokine-induced formation of multinucleated giant cells which are formed by the fusion of macrophages. Stabilizes the TREM2 C-terminal fragment (TREM2-CTF) produced by TREM2 ectodomain shedding which suppresses the release of pro-inflammatory cytokines. In microglia, required with TREM2 for phagocytosis of apoptotic neurons. Required with ITGAM/CD11B in microglia to control production of microglial superoxide ions which promote the neuronal apoptosis that occurs during brain development. Promotes pro-inflammatory responses in microglia following nerve injury which accelerates degeneration of injured neurons. Positively regulates the expression of the IRAK3/IRAK-M kinase and IL10 production by liver dendritic cells and inhibits their T cell allostimulatory ability. Negatively regulates B cell proliferation. Required for CSF1-mediated osteoclast cytoskeletal organization. Positively regulates multinucleation during osteoclast development. The polypeptide is TYRO protein tyrosine kinase-binding protein (Homo sapiens (Human)).